Here is a 310-residue protein sequence, read N- to C-terminus: Transcriptional activator BRRF1 (310 aa).

The protein belongs to the lymphocryptovirus BBRF1 family.

In terms of biological role, enhances the ability of BRLF1 to induce lytic infection by cooperating with it to transcriptionally activate the BZLF1 promoter. The chain is Transcriptional activator BRRF1 from Epstein-Barr virus (strain AG876) (HHV-4).